We begin with the raw amino-acid sequence, 456 residues long: Probable glycine dehydrogenase (decarboxylating) subunit 1 (456 aa).

This sequence belongs to the GcvP family. N-terminal subunit subfamily. As to quaternary structure, the glycine cleavage system is composed of four proteins: P, T, L and H. In this organism, the P 'protein' is a heterodimer of two subunits.

It carries out the reaction N(6)-[(R)-lipoyl]-L-lysyl-[glycine-cleavage complex H protein] + glycine + H(+) = N(6)-[(R)-S(8)-aminomethyldihydrolipoyl]-L-lysyl-[glycine-cleavage complex H protein] + CO2. Functionally, the glycine cleavage system catalyzes the degradation of glycine. The P protein binds the alpha-amino group of glycine through its pyridoxal phosphate cofactor; CO(2) is released and the remaining methylamine moiety is then transferred to the lipoamide cofactor of the H protein. The chain is Probable glycine dehydrogenase (decarboxylating) subunit 1 from Legionella pneumophila (strain Paris).